Reading from the N-terminus, the 71-residue chain is Phosphatidylinositol N-acetylglucosaminyltransferase subunit Y (71 aa).

Topologically, residues 1–5 are cytoplasmic; that stretch reads MIRSL. The chain crosses the membrane as a helical span at residues 6 to 26; it reads PTMTVLIPLVSLAGLLYSASV. Over 27–44 the chain is Lumenal; it reads EEGFPEGCTSASSLCFYS. Residues 45 to 65 traverse the membrane as a helical segment; the sequence is LLLPVTVPVYVFFHLWTWMGL. Residues 66–71 lie on the Cytoplasmic side of the membrane; the sequence is KLFRHN.

Component of the glycosylphosphatidylinositol-N-acetylglucosaminyltransferase (GPI-GnT) complex composed at least by PIGA, PIGC, PIGH, PIGP, PIGQ, PIGY and DPM2. Interacts directly with PIGA; this interaction regulates glycosylphosphatidylinositol-N-acetylglucosaminyltransferase activity. Does not interact with Ras proteins.

Its subcellular location is the endoplasmic reticulum membrane. It functions in the pathway glycolipid biosynthesis; glycosylphosphatidylinositol-anchor biosynthesis. Its function is as follows. Part of the glycosylphosphatidylinositol-N-acetylglucosaminyltransferase (GPI-GnT) complex that catalyzes the transfer of N-acetylglucosamine from UDP-N-acetylglucosamine to phosphatidylinositol and participates in the first step of GPI biosynthesis. May act by regulating the catalytic subunit PIGA. This Mus musculus (Mouse) protein is Phosphatidylinositol N-acetylglucosaminyltransferase subunit Y.